The primary structure comprises 316 residues: Holliday junction branch migration complex subunit RuvB (316 aa).

A large ATPase domain (RuvB-L) region spans residues 1–165; it reads MQITRPHNFE…FGYIARFVSY (165 aa). ATP-binding positions include R5, G46, K49, T50, S51, 112–114, R155, Y165, and R202; that span reads EDF. T50 contacts Mg(2+). The segment at 166 to 236 is small ATPAse domain (RuvB-S); that stretch reads NAEDMKQIIR…IIKKTFKSLD (71 aa). Positions 239–316 are head domain (RuvB-H); sequence EYGLTKDHVE…TYLLKEKLIW (78 aa). DNA is bound by residues K294 and R299.

The protein belongs to the RuvB family. As to quaternary structure, homohexamer. Forms an RuvA(8)-RuvB(12)-Holliday junction (HJ) complex. HJ DNA is sandwiched between 2 RuvA tetramers; dsDNA enters through RuvA and exits via RuvB. An RuvB hexamer assembles on each DNA strand where it exits the tetramer. Each RuvB hexamer is contacted by two RuvA subunits (via domain III) on 2 adjacent RuvB subunits; this complex drives branch migration. In the full resolvosome a probable DNA-RuvA(4)-RuvB(12)-RuvC(2) complex forms which resolves the HJ.

It is found in the cytoplasm. It catalyses the reaction ATP + H2O = ADP + phosphate + H(+). Functionally, the RuvA-RuvB-RuvC complex processes Holliday junction (HJ) DNA during genetic recombination and DNA repair, while the RuvA-RuvB complex plays an important role in the rescue of blocked DNA replication forks via replication fork reversal (RFR). RuvA specifically binds to HJ cruciform DNA, conferring on it an open structure. The RuvB hexamer acts as an ATP-dependent pump, pulling dsDNA into and through the RuvAB complex. RuvB forms 2 homohexamers on either side of HJ DNA bound by 1 or 2 RuvA tetramers; 4 subunits per hexamer contact DNA at a time. Coordinated motions by a converter formed by DNA-disengaged RuvB subunits stimulates ATP hydrolysis and nucleotide exchange. Immobilization of the converter enables RuvB to convert the ATP-contained energy into a lever motion, pulling 2 nucleotides of DNA out of the RuvA tetramer per ATP hydrolyzed, thus driving DNA branch migration. The RuvB motors rotate together with the DNA substrate, which together with the progressing nucleotide cycle form the mechanistic basis for DNA recombination by continuous HJ branch migration. Branch migration allows RuvC to scan DNA until it finds its consensus sequence, where it cleaves and resolves cruciform DNA. This chain is Holliday junction branch migration complex subunit RuvB, found in Mycoplasmopsis synoviae (strain 53) (Mycoplasma synoviae).